The sequence spans 370 residues: 3-dehydroquinate synthase (370 aa).

NAD(+) is bound by residues 112 to 116 (GVVGD), 136 to 137 (TS), Lys-149, Lys-158, and 176 to 179 (TLRT). Zn(2+) is bound by residues Glu-191, His-254, and His-276.

This sequence belongs to the sugar phosphate cyclases superfamily. Dehydroquinate synthase family. Co(2+) is required as a cofactor. The cofactor is Zn(2+). Requires NAD(+) as cofactor.

It is found in the cytoplasm. The catalysed reaction is 7-phospho-2-dehydro-3-deoxy-D-arabino-heptonate = 3-dehydroquinate + phosphate. The protein operates within metabolic intermediate biosynthesis; chorismate biosynthesis; chorismate from D-erythrose 4-phosphate and phosphoenolpyruvate: step 2/7. Catalyzes the conversion of 3-deoxy-D-arabino-heptulosonate 7-phosphate (DAHP) to dehydroquinate (DHQ). This Xanthomonas campestris pv. campestris (strain 8004) protein is 3-dehydroquinate synthase.